We begin with the raw amino-acid sequence, 309 residues long: Malate dehydrogenase (309 aa).

Residues Gly-8–Gly-13 and Asp-33 contribute to the NAD(+) site. The substrate site is built by Arg-82 and Arg-88. NAD(+) is bound by residues Asn-95 and Val-118–Asn-120. 2 residues coordinate substrate: Asn-120 and Arg-151. His-175 serves as the catalytic Proton acceptor.

It belongs to the LDH/MDH superfamily. MDH type 3 family.

It catalyses the reaction (S)-malate + NAD(+) = oxaloacetate + NADH + H(+). Catalyzes the reversible oxidation of malate to oxaloacetate. The polypeptide is Malate dehydrogenase (Pseudomonas putida (strain ATCC 700007 / DSM 6899 / JCM 31910 / BCRC 17059 / LMG 24140 / F1)).